Here is an 82-residue protein sequence, read N- to C-terminus: Conotoxin C11GB (82 aa).

The signal sequence occupies residues 1 to 22; that stretch reads MKLTCVMIVAVLFLTAWTVVTA. A propeptide spanning residues 23–53 is cleaved from the precursor; that stretch reads EPHSSNVLENLYLKAHHEMENPEASKLNTRD. Cystine bridges form between Cys55-Cys72, Cys62-Cys76, and Cys71-Cys80.

This sequence belongs to the conotoxin O1 superfamily. In terms of tissue distribution, expressed by the venom duct.

It localises to the secreted. This Conus vexillum (Flag cone) protein is Conotoxin C11GB.